Reading from the N-terminus, the 354-residue chain is Biotin synthase (354 aa).

Residues 41 to 265 enclose the Radical SAM core domain; that stretch reads NEVQISRLLS…IMPHSRVRLS (225 aa). Positions 56, 60, and 63 each coordinate [4Fe-4S] cluster. Positions 100, 131, 191, and 263 each coordinate [2Fe-2S] cluster.

The protein belongs to the radical SAM superfamily. Biotin synthase family. Homodimer. Requires [4Fe-4S] cluster as cofactor. [2Fe-2S] cluster is required as a cofactor.

It catalyses the reaction (4R,5S)-dethiobiotin + (sulfur carrier)-SH + 2 reduced [2Fe-2S]-[ferredoxin] + 2 S-adenosyl-L-methionine = (sulfur carrier)-H + biotin + 2 5'-deoxyadenosine + 2 L-methionine + 2 oxidized [2Fe-2S]-[ferredoxin]. It functions in the pathway cofactor biosynthesis; biotin biosynthesis; biotin from 7,8-diaminononanoate: step 2/2. Functionally, catalyzes the conversion of dethiobiotin (DTB) to biotin by the insertion of a sulfur atom into dethiobiotin via a radical-based mechanism. This is Biotin synthase from Shewanella sediminis (strain HAW-EB3).